The sequence spans 1501 residues: Ribulose bisphosphate carboxylase (1501 aa).

Asn111 contributes to the substrate binding site. The active-site Proton acceptor is Lys166. Residue Lys168 participates in substrate binding. Residues Lys191, Asp193, and Glu194 each contribute to the Mg(2+) site. Lys191 is modified (N6-carboxylysine). His287 acts as the Proton acceptor in catalysis. Residues Arg288, His321, and Ser368 each coordinate substrate. Positions 486-508 (SAAAFVGASVAPAKKENVVARQA) are cleaved as a propeptide — linker. Asn619 serves as a coordination point for substrate. Catalysis depends on Lys674, which acts as the Proton acceptor. Lys676 is a substrate binding site. Lys699, Asp701, and Glu702 together coordinate Mg(2+). At Lys699 the chain carries N6-carboxylysine. His795 acts as the Proton acceptor in catalysis. Substrate is bound by residues Arg796, His829, and Ser876. The propeptide at 994 to 1016 (SAAAFVGASVAPAKKENVVARQA) is linker. Asn1127 serves as a coordination point for substrate. The active-site Proton acceptor is the Lys1182. A substrate-binding site is contributed by Lys1184. 3 residues coordinate Mg(2+): Lys1207, Asp1209, and Glu1210. Lys1207 carries the N6-carboxylysine modification. His1303 acts as the Proton acceptor in catalysis. Substrate-binding residues include Arg1304, His1337, and Ser1384.

Belongs to the RuBisCO large chain family. Type II subfamily. Homodimer. The cofactor is Mg(2+).

The protein localises to the plastid. It localises to the chloroplast. The catalysed reaction is 2 (2R)-3-phosphoglycerate + 2 H(+) = D-ribulose 1,5-bisphosphate + CO2 + H2O. The enzyme catalyses D-ribulose 1,5-bisphosphate + O2 = 2-phosphoglycolate + (2R)-3-phosphoglycerate + 2 H(+). Its function is as follows. RuBisCO catalyzes two reactions: the carboxylation of D-ribulose 1,5-bisphosphate, the primary event in carbon dioxide fixation, as well as the oxidative fragmentation of the pentose substrate. Both reactions occur simultaneously and in competition at the same active site. This chain is Ribulose bisphosphate carboxylase (rbcL), found in Symbiodinium sp. (Dinoflagellate).